The following is a 60-amino-acid chain: Large ribosomal subunit protein bL32 (60 aa).

The segment covering 1–23 has biased composition (basic residues); the sequence is MAKHPVPKKKTSKARRDARRSHH. The tract at residues 1–28 is disordered; the sequence is MAKHPVPKKKTSKARRDARRSHHALTPP.

The protein belongs to the bacterial ribosomal protein bL32 family. In terms of assembly, part of the 50S ribosomal subunit.

Found on the solvent side of the large subunit. This is Large ribosomal subunit protein bL32 (rpmF) from Thermus thermophilus (strain ATCC BAA-163 / DSM 7039 / HB27).